A 287-amino-acid chain; its full sequence is 26S proteasome non-ATPase regulatory subunit 8 (287 aa).

Ser-43 bears the Phosphoserine mark. The region spanning 99-268 (PSFERYMAQL…QQKPEDTTIP (170 aa)) is the PCI domain. Lys-234 participates in a covalent cross-link: Glycyl lysine isopeptide (Lys-Gly) (interchain with G-Cter in SUMO2).

Belongs to the proteasome subunit S14 family. In terms of assembly, component of the 19S proteasome regulatory particle complex. The 26S proteasome consists of a 20S core particle (CP) and two 19S regulatory subunits (RP). The regulatory particle is made of a lid composed of 9 subunits including PSMD8, a base containing 6 ATPases and few additional components. Interacts with DDI2. Interacts with TASOR.

In terms of biological role, component of the 26S proteasome, a multiprotein complex involved in the ATP-dependent degradation of ubiquitinated proteins. This complex plays a key role in the maintenance of protein homeostasis by removing misfolded or damaged proteins, which could impair cellular functions, and by removing proteins whose functions are no longer required. Therefore, the proteasome participates in numerous cellular processes, including cell cycle progression, apoptosis, or DNA damage repair. This Bos taurus (Bovine) protein is 26S proteasome non-ATPase regulatory subunit 8 (PSMD8).